The primary structure comprises 75 residues: Porwaprin-b (75 aa).

A signal peptide spans 1–24 (MSSGGLLLLLGLLTLWAELTPVSG). The WAP domain maps to 27 to 72 (RPVKPGLCPPRPQKPPCVKECKNDWSCRGEQKCCHYGCIYECRDPI). Disulfide bonds link Cys34–Cys60, Cys43–Cys64, Cys47–Cys59, and Cys53–Cys68.

This sequence belongs to the venom waprin family. As to expression, expressed by the venom gland.

Its subcellular location is the secreted. Damages membranes of susceptible bacteria. Has no hemolytic activity. Not toxic to mice. Does not inhibit the proteinases elastase and cathepsin G. The protein is Porwaprin-b of Pseudechis porphyriacus (Red-bellied black snake).